A 130-amino-acid polypeptide reads, in one-letter code: Small ribosomal subunit protein uS9 (130 aa).

The disordered stretch occupies residues 109–130 (RMKERKKYGLKKARRAPQFSKR). Residues 111–130 (KERKKYGLKKARRAPQFSKR) are compositionally biased toward basic residues.

The protein belongs to the universal ribosomal protein uS9 family.

This is Small ribosomal subunit protein uS9 from Clostridium kluyveri (strain NBRC 12016).